The primary structure comprises 128 residues: Large ribosomal subunit protein bL12 (128 aa).

Belongs to the bacterial ribosomal protein bL12 family. Homodimer. Part of the ribosomal stalk of the 50S ribosomal subunit. Forms a multimeric L10(L12)X complex, where L10 forms an elongated spine to which 2 to 4 L12 dimers bind in a sequential fashion. Binds GTP-bound translation factors.

Forms part of the ribosomal stalk which helps the ribosome interact with GTP-bound translation factors. Is thus essential for accurate translation. The protein is Large ribosomal subunit protein bL12 of Kocuria rhizophila (strain ATCC 9341 / DSM 348 / NBRC 103217 / DC2201).